We begin with the raw amino-acid sequence, 378 residues long: Dual-specificity RNA methyltransferase RlmN (378 aa).

The active-site Proton acceptor is Glu-96. The Radical SAM core domain occupies 102-340 (DNGRGTLCVS…ATVRTTRGDD (239 aa)). Cys-109 and Cys-345 are oxidised to a cystine. Cys-116, Cys-120, and Cys-123 together coordinate [4Fe-4S] cluster. S-adenosyl-L-methionine is bound by residues 170–171 (GE), Ser-202, 224–226 (SLH), and Asn-302. The active-site S-methylcysteine intermediate is the Cys-345.

This sequence belongs to the radical SAM superfamily. RlmN family. [4Fe-4S] cluster serves as cofactor.

The protein resides in the cytoplasm. The catalysed reaction is adenosine(2503) in 23S rRNA + 2 reduced [2Fe-2S]-[ferredoxin] + 2 S-adenosyl-L-methionine = 2-methyladenosine(2503) in 23S rRNA + 5'-deoxyadenosine + L-methionine + 2 oxidized [2Fe-2S]-[ferredoxin] + S-adenosyl-L-homocysteine. The enzyme catalyses adenosine(37) in tRNA + 2 reduced [2Fe-2S]-[ferredoxin] + 2 S-adenosyl-L-methionine = 2-methyladenosine(37) in tRNA + 5'-deoxyadenosine + L-methionine + 2 oxidized [2Fe-2S]-[ferredoxin] + S-adenosyl-L-homocysteine. Functionally, specifically methylates position 2 of adenine 2503 in 23S rRNA and position 2 of adenine 37 in tRNAs. m2A2503 modification seems to play a crucial role in the proofreading step occurring at the peptidyl transferase center and thus would serve to optimize ribosomal fidelity. This is Dual-specificity RNA methyltransferase RlmN from Hahella chejuensis (strain KCTC 2396).